The following is a 211-amino-acid chain: Pyridoxine/pyridoxamine 5'-phosphate oxidase (211 aa).

Substrate-binding positions include 7 to 10 and Lys65; that span reads RREY. FMN is bound by residues 60 to 65, 75 to 76, Lys82, and Gln104; these read RIVLLK and FT. 3 residues coordinate substrate: Tyr122, Arg126, and Ser130. FMN contacts are provided by residues 139–140 and Trp184; that span reads QS. 190 to 192 is a substrate binding site; that stretch reads RLH. Residue Arg194 participates in FMN binding.

This sequence belongs to the pyridoxamine 5'-phosphate oxidase family. As to quaternary structure, homodimer. It depends on FMN as a cofactor.

The enzyme catalyses pyridoxamine 5'-phosphate + O2 + H2O = pyridoxal 5'-phosphate + H2O2 + NH4(+). The catalysed reaction is pyridoxine 5'-phosphate + O2 = pyridoxal 5'-phosphate + H2O2. The protein operates within cofactor metabolism; pyridoxal 5'-phosphate salvage; pyridoxal 5'-phosphate from pyridoxamine 5'-phosphate: step 1/1. It functions in the pathway cofactor metabolism; pyridoxal 5'-phosphate salvage; pyridoxal 5'-phosphate from pyridoxine 5'-phosphate: step 1/1. Functionally, catalyzes the oxidation of either pyridoxine 5'-phosphate (PNP) or pyridoxamine 5'-phosphate (PMP) into pyridoxal 5'-phosphate (PLP). The protein is Pyridoxine/pyridoxamine 5'-phosphate oxidase of Teredinibacter turnerae (strain ATCC 39867 / T7901).